Reading from the N-terminus, the 208-residue chain is Guanylate kinase (208 aa).

One can recognise a Guanylate kinase-like domain in the interval 8–187 (GVCLVISAPS…AISQARSVLT (180 aa)). 15–22 (APSGAGKS) serves as a coordination point for ATP.

Belongs to the guanylate kinase family.

The protein localises to the cytoplasm. The enzyme catalyses GMP + ATP = GDP + ADP. Functionally, essential for recycling GMP and indirectly, cGMP. The protein is Guanylate kinase of Gluconobacter oxydans (strain 621H) (Gluconobacter suboxydans).